The following is a 623-amino-acid chain: Scarecrow-like protein 22 (623 aa).

Disordered stretches follow at residues 62–90 (RSPS…AAAA) and 179–203 (PNPG…QPGS). A compositionally biased stretch (low complexity) spans 63 to 80 (SPSPFVSSSTTTLSSSHG). Residues 235 to 622 (NDQDQSAVII…KELVTVSAWK (388 aa)) form the GRAS domain. Residues 242 to 311 (VIIDQLFSAA…ALHSLLQDSS (70 aa)) form a leucine repeat I (LRI) region. The interval 330 to 398 (YRAFSETSPF…SSAPSLKITA (69 aa)) is VHIID. Residues 361–365 (IHIVD) carry the VHIID motif. Residues 413–448 (FTEENLRSFAGETGVSFEIELLNMEILLNPTYWPLS) form a leucine repeat II (LRII) region. The segment at 458–545 (IAVNLPISSM…RFCVQPSIQK (88 aa)) is PFYRE. The interval 548-622 (TNRYRWMERS…KELVTVSAWK (75 aa)) is SAW.

This sequence belongs to the GRAS family. In terms of tissue distribution, expressed in seedlings, roots, leaves and flowers.

The protein resides in the nucleus. Probable transcription factor involved in plant development. The chain is Scarecrow-like protein 22 (SCL22) from Arabidopsis thaliana (Mouse-ear cress).